A 466-amino-acid chain; its full sequence is Cysteine--tRNA ligase (466 aa).

Residue Cys-27 participates in Zn(2+) binding. The 'HIGH' region signature appears at 29-39 (PTVYNFFHIGN). Zn(2+)-binding residues include Cys-207, His-232, and Glu-236. The 'KMSKS' region signature appears at 264–268 (KMSKS). Lys-267 lines the ATP pocket.

This sequence belongs to the class-I aminoacyl-tRNA synthetase family. In terms of assembly, monomer. Zn(2+) is required as a cofactor.

Its subcellular location is the cytoplasm. It carries out the reaction tRNA(Cys) + L-cysteine + ATP = L-cysteinyl-tRNA(Cys) + AMP + diphosphate. The protein is Cysteine--tRNA ligase of Clostridium beijerinckii (strain ATCC 51743 / NCIMB 8052) (Clostridium acetobutylicum).